The following is a 603-amino-acid chain: Dual specificity protein phosphatase CDC14A (603 aa).

The a stretch occupies residues 7–162 (ELIGACEFMK…GLQHGFFDFE (156 aa)). The interval 163-176 (TFDAEEYEHYERVE) is linker. Positions 177 to 343 (NGDFNWIVPG…QGDIFRSKLK (167 aa)) are b. The 158-residue stretch at 179–336 (DFNWIVPGKF…KQASLWVQGD (158 aa)) folds into the Tyrosine-protein phosphatase domain. Residue C278 is the Phosphocysteine intermediate of the active site. The residue at position 484 (S484) is a Phosphoserine. Residues 518 to 538 (NGSTQTPGRNYPELNNNQYTR) show a composition bias toward polar residues. The disordered stretch occupies residues 518–583 (NGSTQTPGRN…RPSFPGSLSS (66 aa)). 2 stretches are compositionally biased toward low complexity: residues 539-558 (SSNS…LNSS) and 573-583 (LRPSFPGSLSS). Position 592 is a phosphoserine (S592).

Belongs to the protein-tyrosine phosphatase family. Non-receptor class CDC14 subfamily. Interacts with KIF20A. Interaction is required to localize CDC14 to the midzone of the mitotic spindle. In terms of tissue distribution, expressed in the inner ear.

The protein resides in the nucleus. Its subcellular location is the cytoplasm. It is found in the cytoskeleton. The protein localises to the microtubule organizing center. It localises to the centrosome. The protein resides in the spindle. Its subcellular location is the cell projection. It is found in the kinocilium. The protein localises to the spindle pole. It localises to the stereocilium. The catalysed reaction is O-phospho-L-tyrosyl-[protein] + H2O = L-tyrosyl-[protein] + phosphate. It carries out the reaction O-phospho-L-seryl-[protein] + H2O = L-seryl-[protein] + phosphate. The enzyme catalyses O-phospho-L-threonyl-[protein] + H2O = L-threonyl-[protein] + phosphate. Functionally, dual-specificity phosphatase. Required for centrosome separation and productive cytokinesis during cell division. Dephosphorylates SIRT2 around early anaphase. May dephosphorylate the APC subunit FZR1/CDH1, thereby promoting APC-FZR1 dependent degradation of mitotic cyclins and subsequent exit from mitosis. Required for normal hearing. This is Dual specificity protein phosphatase CDC14A (Cdc14a) from Mus musculus (Mouse).